The primary structure comprises 410 residues: MGMSRRMFLTVYGSLWLLLLLSRPGVSKPQLCQTCQNLVTNVLKGIEKTAGLNFGGGNTAWEEEKLSKYEISETRLLEVIETACDKSDFDCNKMLEQNEEHMESWWFKKQKEQPDLFQWLCMDTLRLCCPKGRFGADCLSCPGGTEKPCSGNGQCNGDGTRFGTGVCDCYTSYGGPVCMDCALGYYEQARNESHLVCSECYRACSKCIGPGDDQCVLCKRGWLLHDGKCIDIDECGTEKDHCKSNQFCFNTDGSYECRECDKSCIGCMGGGPARCKKCNKGYYRDGVKCLDVDECDSELPKCKGSHEECVNTEGSFTCVCEKDYSRIDGMCRPDSYDSNAEKGLFDDITDDEVVVLQQMFFGVVICALATLAAKGDMVFTAIFIGAVAAMAGYWLSEKGDRALDSFMKGR.

A signal peptide spans 1 to 29 (MGMSRRMFLTVYGSLWLLLLLSRPGVSKP). Topologically, residues 30–352 (QLCQTCQNLV…GLFDDITDDE (323 aa)) are extracellular. The short motif at 32–35 (CQTC) is the CXXC element. 4 disulfides stabilise this stretch: C32–C35, C141–C155, C149–C167, and C169–C178. Positions 139-179 (LSCPGGTEKPCSGNGQCNGDGTRFGTGVCDCYTSYGGPVCM) constitute an EGF-like 1 domain. FU repeat units follow at residues 194–243 (HLVC…DHCK) and 254–301 (SYEC…ELPK). Positions 264 to 267 (CIGC) match the CXXC motif. 4 disulfides stabilise this stretch: C264–C267, C295–C309, C302–C318, and C320–C331. The EGF-like 2; calcium-binding domain occupies 291–332 (DVDECDSELPKCKGSHEECVNTEGSFTCVCEKDYSRIDGMCR). Residues 353 to 373 (VVVLQQMFFGVVICALATLAA) traverse the membrane as a helical segment. Residue K374 is a topological domain, cytoplasmic. A helical transmembrane segment spans residues 375–395 (GDMVFTAIFIGAVAAMAGYWL). The Extracellular portion of the chain corresponds to 396-410 (SEKGDRALDSFMKGR).

This sequence belongs to the CRELD family.

The protein resides in the membrane. The catalysed reaction is Catalyzes the rearrangement of -S-S- bonds in proteins.. Functionally, protein disulfide isomerase. Promotes the localization of acetylcholine receptors (AChRs) to the plasma membrane. The protein is Protein disulfide isomerase CRELD1 (creld1) of Xenopus tropicalis (Western clawed frog).